Here is a 692-residue protein sequence, read N- to C-terminus: Translation initiation factor IF-2 (692 aa).

Residues 51–114 are disordered; sequence KAKPENAKKG…KPAETPGKIT (64 aa). Residues 59–84 show a composition bias toward low complexity; it reads KGQNQKQSNNQQQNRQKQNQKNQSKP. Residues 85–94 show a composition bias toward basic residues; sequence NKNKKQKGPK. In terms of domain architecture, tr-type G spans 193–362; sequence ERPAVVTIMG…LLVSEVEELK (170 aa). Residues 202 to 209 are G1; the sequence is GHVDHGKT. 202-209 contacts GTP; that stretch reads GHVDHGKT. Residues 227-231 are G2; the sequence is GITQH. The interval 248-251 is G3; sequence DTPG. GTP-binding positions include 248–252 and 302–305; these read DTPGH and NKMD. Residues 302 to 305 are G4; it reads NKMD. A G5 region spans residues 338–340; it reads SAI.

This sequence belongs to the TRAFAC class translation factor GTPase superfamily. Classic translation factor GTPase family. IF-2 subfamily.

Its subcellular location is the cytoplasm. Functionally, one of the essential components for the initiation of protein synthesis. Protects formylmethionyl-tRNA from spontaneous hydrolysis and promotes its binding to the 30S ribosomal subunits. Also involved in the hydrolysis of GTP during the formation of the 70S ribosomal complex. This Oceanobacillus iheyensis (strain DSM 14371 / CIP 107618 / JCM 11309 / KCTC 3954 / HTE831) protein is Translation initiation factor IF-2.